Reading from the N-terminus, the 345-residue chain is Phosphoribosylformylglycinamidine cyclo-ligase (345 aa).

It belongs to the AIR synthase family.

It is found in the cytoplasm. The enzyme catalyses 2-formamido-N(1)-(5-O-phospho-beta-D-ribosyl)acetamidine + ATP = 5-amino-1-(5-phospho-beta-D-ribosyl)imidazole + ADP + phosphate + H(+). It participates in purine metabolism; IMP biosynthesis via de novo pathway; 5-amino-1-(5-phospho-D-ribosyl)imidazole from N(2)-formyl-N(1)-(5-phospho-D-ribosyl)glycinamide: step 2/2. The chain is Phosphoribosylformylglycinamidine cyclo-ligase from Shewanella frigidimarina (strain NCIMB 400).